Consider the following 632-residue polypeptide: Phospholipid:diacylglycerol acyltransferase (632 aa).

Over residues 1–15 (MASSKKSKTHKKKKE) the composition is skewed to basic residues. Residues 1–47 (MASSKKSKTHKKKKEVKSPIDLPNSKKPTRALSEQPSASETQSVSNK) form a disordered region. The Cytoplasmic segment spans residues 1–56 (MASSKKSKTHKKKKEVKSPIDLPNSKKPTRALSEQPSASETQSVSNKSRKSKFGKR). The segment covering 32 to 46 (LSEQPSASETQSVSN) has biased composition (polar residues). A helical transmembrane segment spans residues 57–77 (LNFILGAILGICGAFFFAVGD). The Lumenal segment spans residues 78–632 (DNAVFDPATL…NEINLDKPRN (555 aa)). Residue aspartate 136 participates in substrate binding. The active-site Acyl-ester intermediate is serine 293. Methionine 294 contributes to the substrate binding site. Residues aspartate 535 and histidine 586 each act as charge relay system in the active site.

The protein belongs to the AB hydrolase superfamily. Lipase family.

It is found in the endoplasmic reticulum membrane. It carries out the reaction a glycerophospholipid + a 1,2-diacyl-sn-glycerol = a monoacylglycerophospholipid + a triacyl-sn-glycerol. It participates in glycerolipid metabolism; triacylglycerol biosynthesis. Functionally, catalyzes triacylglycerol (TAG) formation by an acyl-CoA independent pathway. The enzyme specifically transfers acyl groups from the sn-2 position of a phospholipid to diacylglycerol (DAG), thus forming an sn-1-lysophospholipid. Plays a major role in triacylglycerol formation at log phase. Involved in lipid particle synthesis from the endoplasmic reticulum, promoting localized TAG production at discrete ER subdomains. This is Phospholipid:diacylglycerol acyltransferase (plh1) from Schizosaccharomyces pombe (strain 972 / ATCC 24843) (Fission yeast).